Consider the following 205-residue polypeptide: dTTP/UTP pyrophosphatase (205 aa).

Asp-66 (proton acceptor) is an active-site residue.

The protein belongs to the Maf family. YhdE subfamily. It depends on a divalent metal cation as a cofactor.

The protein resides in the cytoplasm. The enzyme catalyses dTTP + H2O = dTMP + diphosphate + H(+). The catalysed reaction is UTP + H2O = UMP + diphosphate + H(+). Its function is as follows. Nucleoside triphosphate pyrophosphatase that hydrolyzes dTTP and UTP. May have a dual role in cell division arrest and in preventing the incorporation of modified nucleotides into cellular nucleic acids. This Anaeromyxobacter sp. (strain Fw109-5) protein is dTTP/UTP pyrophosphatase.